The following is a 223-amino-acid chain: RNA polymerase sigma-H factor (223 aa).

Residues 67 to 80 (DIVQEGMIGLYKSI) carry the Polymerase core binding motif. Residues 187–206 (YQEISEELNRHVKSIDNALQ) constitute a DNA-binding region (H-T-H motif).

This sequence belongs to the sigma-70 factor family.

Functionally, sigma factors are initiation factors that promote the attachment of RNA polymerase to specific initiation sites and are then released. This sigma factor is involved in the transition to post-exponential phase in the beginning of sporulation. The polypeptide is RNA polymerase sigma-H factor (sigH) (Bacillus licheniformis).